The following is a 104-amino-acid chain: Large ribosomal subunit protein uL24 (104 aa).

Residues 82-92 (RIGYRTDENGK) are compositionally biased toward basic and acidic residues. Residues 82-104 (RIGYRTDENGKRVRISRRNGKDI) form a disordered region. Residues 93-104 (RVRISRRNGKDI) are compositionally biased toward basic residues.

This sequence belongs to the universal ribosomal protein uL24 family. Part of the 50S ribosomal subunit.

In terms of biological role, one of two assembly initiator proteins, it binds directly to the 5'-end of the 23S rRNA, where it nucleates assembly of the 50S subunit. Its function is as follows. One of the proteins that surrounds the polypeptide exit tunnel on the outside of the subunit. The sequence is that of Large ribosomal subunit protein uL24 from Nocardia farcinica (strain IFM 10152).